The chain runs to 388 residues: Alanine racemase (388 aa).

Lys-44 serves as the catalytic Proton acceptor; specific for D-alanine. An N6-(pyridoxal phosphate)lysine modification is found at Lys-44. Arg-142 is a substrate binding site. Tyr-273 acts as the Proton acceptor; specific for L-alanine in catalysis. Met-321 lines the substrate pocket.

The protein belongs to the alanine racemase family. Pyridoxal 5'-phosphate serves as cofactor.

It carries out the reaction L-alanine = D-alanine. Its pathway is amino-acid biosynthesis; D-alanine biosynthesis; D-alanine from L-alanine: step 1/1. Catalyzes the interconversion of L-alanine and D-alanine. May also act on other amino acids. The polypeptide is Alanine racemase (alr) (Mycobacterium avium (strain 104)).